A 148-amino-acid polypeptide reads, in one-letter code: Large ribosomal subunit protein bL9 (148 aa).

The protein belongs to the bacterial ribosomal protein bL9 family.

Binds to the 23S rRNA. In Pseudomonas savastanoi pv. phaseolicola (strain 1448A / Race 6) (Pseudomonas syringae pv. phaseolicola (strain 1448A / Race 6)), this protein is Large ribosomal subunit protein bL9.